The primary structure comprises 546 residues: Immunoglobulin-like domain-containing receptor 1 (546 aa).

Residues 1–23 (MAWPKLPAPWLLLCTWLPAGCLS) form the signal peptide. The Ig-like V-type domain occupies 24 to 162 (LLVTVQHTER…TSGDPDKEVK (139 aa)). At 24-167 (LLVTVQHTER…DKEVKLIVLH (144 aa)) the chain is on the extracellular side. Cysteine 45 and cysteine 145 are disulfide-bonded. Residues 168–188 (WLTVIFIILGALLLLLLIGVC) traverse the membrane as a helical segment. Over 189–546 (WCQCCPQYCC…SSHSGRSVVI (358 aa)) the chain is Cytoplasmic. A disordered region spans residues 399-546 (WSGRHRSSRL…SSHSGRSVVI (148 aa)). A compositionally biased stretch (basic and acidic residues) spans 442 to 457 (RCQERPRRPSPRESTQ). The segment covering 458-467 (RHGRRRRHRS) has biased composition (basic residues). Phosphoserine occurs at positions 499 and 501. The segment covering 527-539 (GSVERRSEKDSSH) has biased composition (basic and acidic residues).

Belongs to the immunoglobulin superfamily. LISCH7 family. In terms of assembly, homooligomer. Interacts with MARVELD2 and OCLN; the interaction is required to recruit MARVELD2 to tricellular contacts. Interacts (via C-terminus) with TRA2A, TRA2B and SRSF1. Interacts with PLSCR1. In terms of tissue distribution, mainly expressed in prostate and to a lower extent in testis, pancreas, kidney, heart and liver.

It localises to the cell membrane. It is found in the cell junction. The protein resides in the tight junction. The protein localises to the cytoplasm. Its subcellular location is the cytosol. In terms of biological role, maintains epithelial barrier function by recruiting MARVELD2/tricellulin to tricellular tight junctions (tTJs). Crucial for normal hearing by maintaining the structural and functional integrity of tTJs, which are critical for the survival of auditory neurosensory HCs. Mediates fatty acids and lipoproteins-stimulated CCK/cholecystokinin secretion in the small intestine. In the inner ear, may regulate alternative pre-mRNA splicing via binding to TRA2A, TRA2B and SRSF1. Its function is as follows. (Microbial infection) Promotes influenza virus infection by inhibiting viral nucleoprotein NP binding to PLSCR1 and thereby PLSCR1-mediated antiviral activity. In Homo sapiens (Human), this protein is Immunoglobulin-like domain-containing receptor 1.